The following is a 148-amino-acid chain: Large ribosomal subunit protein uL13 (148 aa).

Composition is skewed to basic and acidic residues over residues 71 to 81 (GKKEKQKEYHE) and 89 to 99 (DHSHSPEEMRA). Disordered stretches follow at residues 71 to 99 (GKKEKQKEYHEYSGYPGGDHSHSPEEMRA) and 125 to 148 (KKLKVYAGPDHPHEAQQPEPLDNA).

It belongs to the universal ribosomal protein uL13 family. As to quaternary structure, part of the 50S ribosomal subunit.

This protein is one of the early assembly proteins of the 50S ribosomal subunit, although it is not seen to bind rRNA by itself. It is important during the early stages of 50S assembly. The chain is Large ribosomal subunit protein uL13 from Salinibacter ruber (strain DSM 13855 / M31).